An 88-amino-acid polypeptide reads, in one-letter code: Conotoxin tx9a (88 aa).

The signal sequence occupies residues 1–27; sequence MHLSLARSAVLMLLLLFALGNFVVVQS. A propeptide spanning residues 28–58 is cleaved from the precursor; that stretch reads GQITRDVDNGQLTDNRRNLQSKWKPVSLYMS. 3 disulfides stabilise this stretch: Cys62–Cys76, Cys66–Cys78, and Cys72–Cys83. A 4-carboxyglutamate; partial mark is found at Glu68 and Glu73. Asn87 bears the Asparagine amide mark.

Exists in 4 different forms, depending on gamma-carboxyglutamations. Tx9a-EE does not contain gamma-carboxyglutamate, tx9a-E/gamma has one gamma-carboxyglutamate at position 73, tx9a-gamma/E has one gamma-carboxyglutamate at position 68, and tx9a-agmma/gamma has two gamma-carboxyglutamates at positions 68 and 73. In terms of tissue distribution, expressed by the venom duct. All different gamma-carboxyalted forms are mostly present in part 2, part 3 and part 4 of the venom duct. They are also found in part 1 (proximal part near the venom bulb) and part 5, but in lower quantity.

The protein resides in the secreted. Neurotoxin. In vivo, intracranial injection into mice of 10 pmol/g of the peptide induces running in circles and hyperactivity. At higher doses (50 pmol/g), the mice exhibit running and climbing symptoms for close to one hour. Between 130 and 150 pmol/g, characteristic 'spasmodic' symptomatology is elicited. A hand clap would make mice jump high and start running rapidly. When exposed to a loud hand clap, or if the cage cover were dropped, the mice lose motor control and exhibit seizure-like symptoms from which they eventually recover. At the highest doses tested (over 250 pmol/g), after the characteristic spasmodic symptomatology, lethality occurs. Injection of a similar dose range intramuscularly into Siamese fighting fish elicited no unusual symptomatology. This is Conotoxin tx9a from Conus textile (Cloth-of-gold cone).